We begin with the raw amino-acid sequence, 87 residues long: Large ribosomal subunit protein bL31B (87 aa).

This sequence belongs to the bacterial ribosomal protein bL31 family. Type B subfamily. As to quaternary structure, part of the 50S ribosomal subunit.

The sequence is that of Large ribosomal subunit protein bL31B from Salinispora arenicola (strain CNS-205).